An 81-amino-acid polypeptide reads, in one-letter code: Short neurotoxin 2 (81 aa).

A signal peptide spans 1-21 (MKTLLLTLVVVTIVCLDLGYT). Cystine bridges form between C24/C43, C38/C60, C62/C73, and C74/C79.

The protein belongs to the three-finger toxin family. Short-chain subfamily. Type I alpha-neurotoxin sub-subfamily. Expressed by the venom gland.

The protein resides in the secreted. Its function is as follows. Binds to muscle nicotinic acetylcholine receptor (nAChR) and inhibit acetylcholine from binding to the receptor, thereby impairing neuromuscular transmission. The chain is Short neurotoxin 2 from Hydrophis hardwickii (Hardwick's spine-bellied seasnake).